Reading from the N-terminus, the 286-residue chain is General stress protein 39 (286 aa).

The segment at 1–26 is disordered; sequence MANYPKELPAQTQSRQPGIESEMNPS. 46–70 provides a ligand contact to NAD(+); it reads LITGGDSGIGRAVSVAYAKEGADIA. Residue Ser178 participates in substrate binding. Tyr191 (proton acceptor) is an active-site residue.

Belongs to the short-chain dehydrogenases/reductases (SDR) family.

The polypeptide is General stress protein 39 (ydaD) (Bacillus subtilis (strain 168)).